Consider the following 361-residue polypeptide: Putative F-box protein At1g33010 (361 aa).

In terms of domain architecture, F-box spans 4 to 50; the sequence is GNTLDSIPTDLILEIFSRLSAKSVGRLRCLSKLWRKGEWFFFSSLQP. Positions 308 to 339 are disordered; that stretch reads SIRPTEQKHKPTSTETSMSRKDHQVRTIDQPQ.

This Arabidopsis thaliana (Mouse-ear cress) protein is Putative F-box protein At1g33010.